The primary structure comprises 259 residues: Borneol dehydrogenase, mitochondrial (259 aa).

A mitochondrion-targeting transit peptide spans 1–30; sequence MASTVLRRLEGKVALITGAASGIGESAARL. NAD(+) contacts are provided by residues 21-23, aspartate 42, 63-64, and 90-92; these read SGI, DV, and NAG. Serine 144 serves as the catalytic Proton donor. Substrate-binding residues include serine 144 and tyrosine 157. Positions 157, 161, and 192 each coordinate NAD(+). Residue tyrosine 157 is the Proton acceptor of the active site. Catalysis depends on lysine 161, which acts as the Proton donor/acceptor.

The protein belongs to the short-chain dehydrogenases/reductases (SDR) family. As to expression, specifically expressed in glandular trichomes of mature flowers.

Its subcellular location is the mitochondrion. The enzyme catalyses borneol + NAD(+) = camphor + NADH + H(+). It participates in secondary metabolite biosynthesis; terpenoid biosynthesis. Involved in the biosynthesis of monoterpenes natural products related to camphor. Catalyzes the conversion of borneol into camphor. This is Borneol dehydrogenase, mitochondrial from Lavandula x intermedia (Lavandin).